Here is a 545-residue protein sequence, read N- to C-terminus: Chaperonin GroEL 3 (545 aa).

ATP is bound by residues 29–32 (TLGP), 86–90 (DGTTT), Gly-413, 479–481 (DAV), and Asp-495. The tract at residues 526–545 (DKQAKAPAGVGPGPGEGFDY) is disordered. Residues 535 to 545 (VGPGPGEGFDY) show a composition bias toward gly residues.

The protein belongs to the chaperonin (HSP60) family. In terms of assembly, forms a cylinder of 14 subunits composed of two heptameric rings stacked back-to-back. Interacts with the co-chaperonin GroES.

It is found in the cytoplasm. It catalyses the reaction ATP + H2O + a folded polypeptide = ADP + phosphate + an unfolded polypeptide.. In terms of biological role, together with its co-chaperonin GroES, plays an essential role in assisting protein folding. The GroEL-GroES system forms a nano-cage that allows encapsulation of the non-native substrate proteins and provides a physical environment optimized to promote and accelerate protein folding. The sequence is that of Chaperonin GroEL 3 from Trichormus variabilis (strain ATCC 29413 / PCC 7937) (Anabaena variabilis).